Reading from the N-terminus, the 221-residue chain is Vesicle-associated membrane protein 714 (221 aa).

Residue Ala2 is modified to N-acetylalanine. Residues 2 to 190 (AIVYAVVARG…RRALWMKNAK (189 aa)) lie on the Cytoplasmic side of the membrane. Positions 7–112 (VVARGTVVLA…AMNDEFSRVL (106 aa)) constitute a Longin domain. Positions 127 to 187 (TLNRVRGEVS…KRLRRALWMK (61 aa)) constitute a v-SNARE coiled-coil homology domain. The chain crosses the membrane as a helical; Anchor for type IV membrane protein span at residues 191–211 (LLVLLTCLIVFLLYIIIASFC). The Vesicular segment spans residues 212 to 221 (GGITLPSCRS).

The protein belongs to the synaptobrevin family. As to expression, highly expressed in leaves, stems and roots. Detected in flowers.

The protein localises to the golgi apparatus membrane. In terms of biological role, involved in the targeting and/or fusion of transport vesicles to their target membrane. The sequence is that of Vesicle-associated membrane protein 714 from Arabidopsis thaliana (Mouse-ear cress).